The sequence spans 100 residues: uncharacterized protein (100 aa).

This is an uncharacterized protein from Lactuca sativa (Garden lettuce).